A 197-amino-acid chain; its full sequence is Protein jagunal (197 aa).

The Cytoplasmic segment spans residues 1–39; sequence MATRGGPMVAGTDGNDFEFRQRVAGTYQISLLNKSRLKY. Residues 40-60 form a helical membrane-spanning segment; it reads CIFFHALLFFVMLAKLTSDIL. The Lumenal portion of the chain corresponds to 61–78; the sequence is DHLDIFVLEIEELEVPPP. A helical membrane pass occupies residues 79–99; the sequence is LWWEYVWAASLLTSFLGLSAA. The Cytoplasmic segment spans residues 100–109; that stretch reads RGNKVREMQK. Residues 110-130 traverse the membrane as a helical segment; sequence YMVAILLFAILPLFYCFAYYF. Topologically, residues 131 to 159 are lumenal; it reads SDVWEFATLDKSVELDETDIFVWRGYPYG. A helical transmembrane segment spans residues 160–180; the sequence is VFWYAFCFVGFQVHGFTLYFA. The Cytoplasmic segment spans residues 181 to 197; that stretch reads YNLVKAWKARTATRKFQ.

This sequence belongs to the jagunal family.

It is found in the endoplasmic reticulum membrane. Its function is as follows. Required for endoplasmic reticulum organization and proper vesicular traffic during vitellogenesis. Required for oocyte and bristle growth. The protein is Protein jagunal of Drosophila melanogaster (Fruit fly).